The chain runs to 57 residues: Potassium channel toxin MeuTXKalpha2 (57 aa).

The N-terminal stretch at M1 to T19 is a signal peptide. The propeptide occupies I20–A28. Cystine bridges form between C31–C47, C34–C52, and C38–C54.

The protein belongs to the short scorpion toxin superfamily. Potassium channel inhibitor family. Alpha-KTx 08 subfamily. In terms of tissue distribution, expressed by the venom gland.

Its subcellular location is the secreted. Functionally, inhibits Kv1.1/KCNA1, Kv1.3/KCNA3 and Shaker potassium channels. This is Potassium channel toxin MeuTXKalpha2 from Mesobuthus eupeus (Lesser Asian scorpion).